The following is a 186-amino-acid chain: Ribosome-recycling factor (186 aa).

It belongs to the RRF family.

It is found in the cytoplasm. Functionally, responsible for the release of ribosomes from messenger RNA at the termination of protein biosynthesis. May increase the efficiency of translation by recycling ribosomes from one round of translation to another. This Albidiferax ferrireducens (strain ATCC BAA-621 / DSM 15236 / T118) (Rhodoferax ferrireducens) protein is Ribosome-recycling factor.